The primary structure comprises 155 residues: Ribosomal RNA large subunit methyltransferase H (155 aa).

Residues L72, G103, and 122 to 127 (LSTMTL) contribute to the S-adenosyl-L-methionine site.

This sequence belongs to the RNA methyltransferase RlmH family. Homodimer.

The protein localises to the cytoplasm. The catalysed reaction is pseudouridine(1915) in 23S rRNA + S-adenosyl-L-methionine = N(3)-methylpseudouridine(1915) in 23S rRNA + S-adenosyl-L-homocysteine + H(+). Specifically methylates the pseudouridine at position 1915 (m3Psi1915) in 23S rRNA. The polypeptide is Ribosomal RNA large subunit methyltransferase H (Nitrosomonas eutropha (strain DSM 101675 / C91 / Nm57)).